A 2417-amino-acid chain; its full sequence is Protein pad-1 (2417 aa).

4 disordered regions span residues 409-437 (SSNS…DREG), 449-475 (SNKD…PDEE), 994-1029 (TSTG…DDDT), and 1957-2032 (SMSN…RRDP). Low complexity-rich tracts occupy residues 456–468 (TSVT…NASS) and 1002–1024 (DPSA…VVPA). The segment covering 1969–1982 (DNPSGSTRNSTLSL) has biased composition (polar residues). The span at 2003-2014 (SKSENMKIEKKS) shows a compositional bias: basic and acidic residues. The segment covering 2015–2025 (SSNLRASIKDT) has biased composition (polar residues).

Belongs to the DOP1 family.

Functionally, may be involved in protein traffic between late Golgi and early endosomes. Essential for cell patterning during gastrulation. The polypeptide is Protein pad-1 (pad-1) (Caenorhabditis elegans).